The sequence spans 2878 residues: Trinucleotide repeat-containing gene 18 protein (2878 aa).

2 disordered regions span residues 1 to 54 and 102 to 194; these read MDGR…KYMA and TQKD…SSRL. Over residues 119-128 the composition is skewed to polar residues; the sequence is TPSSRTPSGH. 3 stretches are compositionally biased toward basic and acidic residues: residues 137 to 149, 158 to 169, and 179 to 194; these read SSRE…RAGR, GKKDPRAREEVS, and QEAR…SSRL. At Ser-199 the chain carries Phosphoserine. Disordered stretches follow at residues 259–289, 313–442, 487–507, 540–655, 865–1002, 1033–1104, 1127–1146, 1171–1228, 1429–1535, 1613–1668, 1694–1718, and 1737–1787; these read ARPC…AGVY, FDER…KWKP, MPRA…AAHG, SPFG…DDEC, AQEH…ALFT, ADGL…LESP, LEAQ…SEVS, LGTQ…DCDL, ELVK…DSSS, LGLS…DEDE, VPKN…RTLK, and EARS…GEQA. Positions 264-283 are enriched in pro residues; that stretch reads SPLPPPPPLPPKGPPAPPSS. 2 stretches are compositionally biased toward basic and acidic residues: residues 327 to 337 and 350 to 362; these read RDVRAREREPG and RLER…EKSS. Low complexity predominate over residues 376-390; sequence PPAARSSRSSPDARA. Residues 396–411 show a composition bias toward basic and acidic residues; sequence ELLKPEADPRPCERAP. Ser-540 carries the post-translational modification Phosphoserine. A Glycyl lysine isopeptide (Lys-Gly) (interchain with G-Cter in SUMO2) cross-link involves residue Lys-549. 2 stretches are compositionally biased toward basic and acidic residues: residues 580 to 589 and 865 to 881; these read LKRDPERPES and AQEH…KRSL. Over residues 958–969 the composition is skewed to pro residues; that stretch reads SSPPPASPPPTP. Basic and acidic residues predominate over residues 972–993; that stretch reads TRKEEAPENVVEKKDLELEKET. Ser-1053 and Ser-1062 each carry phosphoserine. A compositionally biased stretch (basic and acidic residues) spans 1068–1088; sequence EPPRDSPEEEQLADREVKAEV. Residues 1410-1442 adopt a coiled-coil conformation; sequence LDFRMRLAEVQRRYKEKQRELVKLQRRRDSGDR. Residues 1429-1448 show a composition bias toward basic and acidic residues; it reads ELVKLQRRRDSGDRHEDAHR. Positions 1449 to 1463 are enriched in basic residues; that stretch reads SLARRGPGRPRKRTH. Ser-1469 is modified (phosphoserine). Low complexity predominate over residues 1478–1492; the sequence is SSSGKGLSSKSLLTS. Acidic residues predominate over residues 1745 to 1775; sequence SSEEDSFDQDDSSEEEEEELEEEEEDEEEEG. Ser-1789 and Ser-1795 each carry phosphoserine. Residues 1825 to 1835 are compositionally biased toward basic and acidic residues; that stretch reads EQKARKKEERQ. 3 disordered regions span residues 1825–2040, 2052–2080, and 2226–2681; these read EQKA…GAVS, FEAN…TPAP, and LLVP…RLPS. Low complexity predominate over residues 1876 to 1890; sequence AAPGPGSRASGPSSP. 4 stretches are compositionally biased toward basic and acidic residues: residues 1891–1900, 1925–1936, 1966–1978, and 2024–2034; these read DKAKLVSEKG, LWTRRRSERIFL, PRKD…DRKD, and RGKEAKKENRG. Thr-2077 carries the phosphothreonine modification. Basic and acidic residues predominate over residues 2238 to 2247; it reads TSKDTGEVKE. Positions 2261–2270 are enriched in basic residues; it reads ARGRGRKPST. Composition is skewed to basic and acidic residues over residues 2307–2316 and 2409–2419; these read STPEPVDKRA and AKEALLLREDP. Low complexity-rich tracts occupy residues 2460-2470, 2491-2520, and 2540-2578; these read EPGPGLPLEDP, TTSS…SGSE, and RTCS…SSST. A compositionally biased stretch (acidic residues) spans 2579 to 2591; sequence TDEDSSCSSDEEA. Residues 2631–2641 are compositionally biased toward pro residues; sequence TQPPPQPPPQP. Phosphoserine is present on Ser-2681. Positions 2727 to 2872 constitute a BAH domain; the sequence is EMIRIGDCAV…PTTGMIFSTD (146 aa).

In Mus musculus (Mouse), this protein is Trinucleotide repeat-containing gene 18 protein (Tnrc18).